The chain runs to 595 residues: L-allo-isoleucine:holo-[CmaA peptidyl-carrier protein] ligase (595 aa).

The Carrier domain maps to 507-582; sequence VVSPQAGSAV…EWVQYYATHA (76 aa). Residue S542 is modified to O-(pantetheine 4'-phosphoryl)serine.

The protein belongs to the ATP-dependent AMP-binding enzyme family. In terms of assembly, homodimer. It depends on pantetheine 4'-phosphate as a cofactor.

The catalysed reaction is L-alloisoleucine + holo-[CmaA peptidyl-carrier protein] + ATP = L-alloisoleucyl-[CmaA peptidyl-carrier protein] + AMP + diphosphate. Its function is as follows. Involved in the biosynthesis of the phytotoxin coronatine (COR) which mimics the plant hormone jasmonic acid isoleucine and promotes opening of stomata for bacterial entry, bacterial growth in the apoplast, systemic susceptibility, and disease symptoms. CmaA catalyzes the adenylation of L-allo-isoleucine (via the A domain) and the attachment of L-allo-isoleucine to the 4'-phosphopantetheine arm located within the T domain of CmaA. It can also use L-isoleucine, L-leucine and L-valine as substrates. The protein is L-allo-isoleucine:holo-[CmaA peptidyl-carrier protein] ligase of Pseudomonas savastanoi pv. glycinea (Pseudomonas syringae pv. glycinea).